A 396-amino-acid polypeptide reads, in one-letter code: Stearoyl-[acyl-carrier-protein] 9-desaturase 2, chloroplastic (396 aa).

A chloroplast-targeting transit peptide spans 1 to 32 (MALRPNDVTLRLTPPLAAAARRNRRAAAGGVR). Fe cation is bound by residues glutamate 138, glutamate 176, histidine 179, glutamate 229, glutamate 262, and histidine 265.

It belongs to the fatty acid desaturase type 2 family. As to quaternary structure, homodimer. It depends on Fe(2+) as a cofactor.

The protein localises to the plastid. It is found in the chloroplast. The enzyme catalyses octadecanoyl-[ACP] + 2 reduced [2Fe-2S]-[ferredoxin] + O2 + 2 H(+) = (9Z)-octadecenoyl-[ACP] + 2 oxidized [2Fe-2S]-[ferredoxin] + 2 H2O. It participates in lipid metabolism; fatty acid metabolism. Converts stearoyl-ACP to oleoyl-ACP by introduction of a cis double bond between carbons 9 and 10 of the acyl chain. Required for the repression of the salicylic acid (SA) signaling pathway. This is Stearoyl-[acyl-carrier-protein] 9-desaturase 2, chloroplastic (SSI2) from Oryza sativa subsp. indica (Rice).